Reading from the N-terminus, the 158-residue chain is Protein Smg homolog (158 aa).

It belongs to the Smg family.

This chain is Protein Smg homolog, found in Vibrio atlanticus (strain LGP32) (Vibrio splendidus (strain Mel32)).